We begin with the raw amino-acid sequence, 130 residues long: Large ribosomal subunit protein bL31c (130 aa).

The transit peptide at 1 to 36 (MVLTLSNQFLAKIPATPKTLTLPKTSSSTLRPQWSC) directs the protein to the chloroplast.

This sequence belongs to the bacterial ribosomal protein bL31 family. Type A subfamily. In terms of assembly, component of the chloroplast large ribosomal subunit (LSU). Mature 70S chloroplast ribosomes of higher plants consist of a small (30S) and a large (50S) subunit. The 30S small subunit contains 1 molecule of ribosomal RNA (16S rRNA) and 24 different proteins. The 50S large subunit contains 3 rRNA molecules (23S, 5S and 4.5S rRNA) and 33 different proteins.

It localises to the plastid. Its subcellular location is the chloroplast. Functionally, component of the chloroplast ribosome (chloro-ribosome), a dedicated translation machinery responsible for the synthesis of chloroplast genome-encoded proteins, including proteins of the transcription and translation machinery and components of the photosynthetic apparatus. In Spinacia oleracea (Spinach), this protein is Large ribosomal subunit protein bL31c (RPL31).